Reading from the N-terminus, the 188-residue chain is Phosphatidylinositol N-acetylglucosaminyltransferase subunit H (188 aa).

The protein belongs to the PIGH family. Component of the glycosylphosphatidylinositol-N-acetylglucosaminyltransferase (GPI-GnT) complex composed at least by PIGA, PIGC, PIGH, PIGP, PIGQ, PIGY and DPM2. Interacts with PIGQ.

It localises to the cytoplasm. The protein operates within glycolipid biosynthesis; glycosylphosphatidylinositol-anchor biosynthesis. Functionally, part of the glycosylphosphatidylinositol-N-acetylglucosaminyltransferase (GPI-GnT) complex that catalyzes the transfer of N-acetylglucosamine from UDP-N-acetylglucosamine to phosphatidylinositol and participates in the first step of GPI biosynthesis. This is Phosphatidylinositol N-acetylglucosaminyltransferase subunit H from Bos taurus (Bovine).